The following is a 135-amino-acid chain: Small ribosomal subunit protein uS11 (135 aa).

The span at 1-11 (MPPKARAGAAV) shows a compositional bias: low complexity. The interval 1 to 22 (MPPKARAGAAVKKVRRKERKNV) is disordered.

Belongs to the universal ribosomal protein uS11 family. In terms of assembly, part of the 30S ribosomal subunit. Interacts with proteins S7 and S18. Binds to IF-3.

Located on the platform of the 30S subunit, it bridges several disparate RNA helices of the 16S rRNA. Forms part of the Shine-Dalgarno cleft in the 70S ribosome. This Salinispora tropica (strain ATCC BAA-916 / DSM 44818 / JCM 13857 / NBRC 105044 / CNB-440) protein is Small ribosomal subunit protein uS11.